A 171-amino-acid polypeptide reads, in one-letter code: MGHPRKARKKYDTPPHPWNAERIKEENRLVAKYGLKNKKEVWKAETMVRRYRRDARYLLGMASEHTGKEREQLLGHLVRTGILNEGAKLEDVLDLTVEDVLRRRLQTLVHKRGLARTVKEARQMVIHGHIALDGRKIDAPGYIVKRGEEDKIGFYPSSPMKKQIEAAQDAE.

Residues 103-167 (RRLQTLVHKR…SPMKKQIEAA (65 aa)) enclose the S4 RNA-binding domain.

The protein belongs to the universal ribosomal protein uS4 family. Part of the 30S ribosomal subunit. Contacts protein S5. The interaction surface between S4 and S5 is involved in control of translational fidelity.

One of the primary rRNA binding proteins, it binds directly to 16S rRNA where it nucleates assembly of the body of the 30S subunit. Its function is as follows. With S5 and S12 plays an important role in translational accuracy. In Methanothermobacter thermautotrophicus (strain ATCC 29096 / DSM 1053 / JCM 10044 / NBRC 100330 / Delta H) (Methanobacterium thermoautotrophicum), this protein is Small ribosomal subunit protein uS4.